The primary structure comprises 715 residues: Fatty acid oxidation complex subunit alpha (715 aa).

Residues 1 to 190 (MIYEGKAITV…KVGAVDAVVA (190 aa)) form an enoyl-CoA hydratase/isomerase region. Residue aspartate 297 participates in substrate binding. Positions 312 to 715 (HDVKQAAVLG…MAKNGQRFFN (404 aa)) are 3-hydroxyacyl-CoA dehydrogenase. NAD(+)-binding positions include methionine 325, aspartate 344, 401-403 (VVE), lysine 408, and serine 430. Residue histidine 451 is the For 3-hydroxyacyl-CoA dehydrogenase activity of the active site. Asparagine 454 provides a ligand contact to NAD(+). Asparagine 501 and tyrosine 660 together coordinate substrate.

The protein in the N-terminal section; belongs to the enoyl-CoA hydratase/isomerase family. In the C-terminal section; belongs to the 3-hydroxyacyl-CoA dehydrogenase family. In terms of assembly, heterotetramer of two alpha chains (FadB) and two beta chains (FadA).

It catalyses the reaction a (3S)-3-hydroxyacyl-CoA + NAD(+) = a 3-oxoacyl-CoA + NADH + H(+). It carries out the reaction a (3S)-3-hydroxyacyl-CoA = a (2E)-enoyl-CoA + H2O. The enzyme catalyses a 4-saturated-(3S)-3-hydroxyacyl-CoA = a (3E)-enoyl-CoA + H2O. The catalysed reaction is (3S)-3-hydroxybutanoyl-CoA = (3R)-3-hydroxybutanoyl-CoA. It catalyses the reaction a (3Z)-enoyl-CoA = a 4-saturated (2E)-enoyl-CoA. It carries out the reaction a (3E)-enoyl-CoA = a 4-saturated (2E)-enoyl-CoA. It participates in lipid metabolism; fatty acid beta-oxidation. Involved in the aerobic and anaerobic degradation of long-chain fatty acids via beta-oxidation cycle. Catalyzes the formation of 3-oxoacyl-CoA from enoyl-CoA via L-3-hydroxyacyl-CoA. It can also use D-3-hydroxyacyl-CoA and cis-3-enoyl-CoA as substrate. This Pseudomonas putida (strain ATCC 47054 / DSM 6125 / CFBP 8728 / NCIMB 11950 / KT2440) protein is Fatty acid oxidation complex subunit alpha.